Reading from the N-terminus, the 317-residue chain is Methionyl-tRNA formyltransferase (317 aa).

112–115 is a (6S)-5,6,7,8-tetrahydrofolate binding site; the sequence is SLLP.

Belongs to the Fmt family.

The catalysed reaction is L-methionyl-tRNA(fMet) + (6R)-10-formyltetrahydrofolate = N-formyl-L-methionyl-tRNA(fMet) + (6S)-5,6,7,8-tetrahydrofolate + H(+). In terms of biological role, attaches a formyl group to the free amino group of methionyl-tRNA(fMet). The formyl group appears to play a dual role in the initiator identity of N-formylmethionyl-tRNA by promoting its recognition by IF2 and preventing the misappropriation of this tRNA by the elongation apparatus. The sequence is that of Methionyl-tRNA formyltransferase from Mesorhizobium japonicum (strain LMG 29417 / CECT 9101 / MAFF 303099) (Mesorhizobium loti (strain MAFF 303099)).